Here is a 222-residue protein sequence, read N- to C-terminus: Peroxiredoxin (222 aa).

Residues Pro-7–Thr-163 enclose the Thioredoxin domain. Cys-49 functions as the Cysteine sulfenic acid (-SOH) intermediate in the catalytic mechanism. Substrate is bound at residue Arg-126. Cys-212 and Cys-218 form a disulfide bridge.

The protein belongs to the peroxiredoxin family. Prx6 subfamily. In terms of assembly, homodecamer. Pentamer of dimers that assemble into a ring structure.

Its subcellular location is the cytoplasm. It carries out the reaction a hydroperoxide + [thioredoxin]-dithiol = an alcohol + [thioredoxin]-disulfide + H2O. Functionally, thiol-specific peroxidase that catalyzes the reduction of hydrogen peroxide and organic hydroperoxides to water and alcohols, respectively. Plays a role in cell protection against oxidative stress by detoxifying peroxides. This is Peroxiredoxin from Aquifex aeolicus (strain VF5).